The primary structure comprises 210 residues: Cyclin-U1-1 (210 aa).

This sequence belongs to the cyclin family. Cyclin U/P subfamily. As to quaternary structure, interacts with CDKA-1. As to expression, expressed in roots and flowers. Expressed in the shoot apex, leaf primordia and young leaves.

The protein is Cyclin-U1-1 (CYCU1-1) of Arabidopsis thaliana (Mouse-ear cress).